The chain runs to 835 residues: Ribosome-releasing factor 2, mitochondrial (835 aa).

The transit peptide at 1-50 directs the protein to the mitochondrion; that stretch reads MPWCNTRLRTCGASPKIFLRRVRCPVLLHNWTIGRVSSVSKMILRFLRSY. In terms of domain architecture, tr-type G spans 57–343; that stretch reads TRVRNIGIIA…AVVDYLPSPA (287 aa). Residues 66 to 73, 131 to 135, and 183 to 186 each bind GTP; these read AHIDAGKT, DTPGH, and NKMD.

This sequence belongs to the TRAFAC class translation factor GTPase superfamily. Classic translation factor GTPase family. EF-G/EF-2 subfamily.

It localises to the mitochondrion. In terms of biological role, mitochondrial GTPase that mediates the disassembly of ribosomes from messenger RNA at the termination of mitochondrial protein biosynthesis. Not involved in the GTP-dependent ribosomal translocation step during translation elongation. This Eremothecium gossypii (strain ATCC 10895 / CBS 109.51 / FGSC 9923 / NRRL Y-1056) (Yeast) protein is Ribosome-releasing factor 2, mitochondrial.